We begin with the raw amino-acid sequence, 445 residues long: Endoplasmic reticulum membrane adapter protein XK (445 aa).

Residues 1 to 2 (MK) lie on the Cytoplasmic side of the membrane. A helical membrane pass occupies residues 3 to 23 (FPASVLASVFLFVAETMAALY). Residues 24–37 (LSSTYRSAGDRMWQ) are Extracellular-facing. A helical transmembrane segment spans residues 38 to 58 (ALTLFFSLMPCTLVQLTLLFV). Topologically, residues 59–68 (HRDLSRDRPL) are cytoplasmic. Residues 69–89 (VLLMHLLQLGPLYRCCEVFCI) traverse the membrane as a helical segment. The Extracellular segment spans residues 90–140 (YCQSDQNEEPYVSITKKRQMPKDGLSEEVEKEVGQSEGKLFTHRSAFSRAS). Residue Ser-115 is modified to Phosphoserine. A helical membrane pass occupies residues 141-161 (VIQAFLGSAPQLTLQLYITVL). The Cytoplasmic portion of the chain corresponds to 162–170 (EQNITTGRF). A helical transmembrane segment spans residues 171 to 191 (IMVLSLLSIVYGALRCNILAI). Residues 192 to 207 (KIKYDEYEVKVKPLAY) lie on the Extracellular side of the membrane. A helical membrane pass occupies residues 208–228 (VCIFLWRSFEIATRVIVLVLF). Residues 229–234 (TSVLKI) are Cytoplasmic-facing. The helical transmembrane segment at 235 to 255 (WVVVVILVNFFSFFLYPWILF) threads the bilayer. Residues 256-276 (WNSGSPFPENIEKALTRVGTT) are Extracellular-facing. A helical transmembrane segment spans residues 277-297 (IVLGFLTLLYAGINMFCWSAV). The Cytoplasmic segment spans residues 298–316 (QLKIDNPELISKSQNWYRL). A helical membrane pass occupies residues 317-337 (LIYYMMRFVENSVLLLLWFFF). The Extracellular portion of the chain corresponds to 338–348 (KTDIYMYVCAP). A helical membrane pass occupies residues 349 to 369 (LLILQLLIGYCTSILFMLVFY). At 370 to 445 (QFFHPCKKLF…IWTAVDLCST (76 aa)) the chain is on the cytoplasmic side.

The protein belongs to the XK family. Heterodimer with Kell; disulfide-linked. Interacts with VPS13A.

Its subcellular location is the endoplasmic reticulum membrane. Functionally, recruits the lipid transfer protein VPS13A from lipid droplets to the endoplasmic reticulum (ER) membrane. In Rattus norvegicus (Rat), this protein is Endoplasmic reticulum membrane adapter protein XK.